The sequence spans 105 residues: Protein LBH (105 aa).

In terms of domain architecture, LBH spans 18–104 (MTEVMMNTQP…CEETAKENKE (87 aa)). Serine 63 is modified (phosphoserine). The span at 86–96 (LVQEDEQDNCE) shows a compositional bias: acidic residues. Positions 86–105 (LVQEDEQDNCEETAKENKEQ) are disordered.

The protein belongs to the LBH family. As to expression, highly expressed in heart, and expressed at low levels in placenta, lung, skeletal muscle, kidney and liver.

The protein resides in the nucleus. Its subcellular location is the cytoplasm. In terms of biological role, transcriptional activator which may act in mitogen-activated protein kinase signaling pathway. The polypeptide is Protein LBH (Homo sapiens (Human)).